Consider the following 508-residue polypeptide: MNTVSPAKKKVIIIGAGIAGLKAASTLHQNGIQDCLVLEARDRVGGRLQTVTGYQGRKYDIGASWHHDTLTNPLFLEEAQLSLNDGRTRFVFDDDNFIYIDEERGRVDHDKELLLEIVDNEMSKFAELEFHQHLGVSDCSFFQLVMKYLLQRRQFLTNDQIRYLPQLCRYLELWHGLDWKLLSAKDTYFGHQGRNAFALNYDSVVQRIAQSFPQNWLKLSCEVKSITREPSKNVTVNCEDGTVYNADYVIITVPQSVLNLSVQPEKNLRGRIEFQPPLKPVIQDAFDKIHFGALGKVIFEFEECCWSNESSKIVTLANSTNEFVEIVRNAENLDELDSMLEREDSQKHTSVTCWSQPLFFVNLSKSTGVASFMMLMQAPLTNHIESIREDKERLFSFFQPVLNKIMKCLDSEDVIDGMRPIENIANANKPVLRNIIVSNWTRDPYSRGAYSACFPGDDPVDMVVAMSNGQDSRIRFAGEHTIMDGAGCAYGAWESGRREATRISDLLK.

It belongs to the flavin monoamine oxidase family. Requires FAD as cofactor.

It carries out the reaction spermine + O2 + H2O = 3-aminopropanal + spermidine + H2O2. It catalyses the reaction spermidine + O2 + H2O = 3-aminopropanal + putrescine + H2O2. The catalysed reaction is N(1)-acetylspermine + O2 + H2O = 3-acetamidopropanal + spermidine + H2O2. The enzyme catalyses N(1)-acetylspermidine + O2 + H2O = 3-acetamidopropanal + putrescine + H2O2. It carries out the reaction N(8)-acetylspermidine + O2 + H2O = 4-acetamidobutanal + propane-1,3-diamine + H2O2. Involved in the production of beta-alanine, a precursor of pantothenic acid. Multicopy suppressor of fenpropimorph resistance. This Saccharomyces cerevisiae (strain ATCC 204508 / S288c) (Baker's yeast) protein is Polyamine oxidase FMS1 (FMS1).